The primary structure comprises 914 residues: Chlorate reductase subunit alpha (914 aa).

Positions 1–32 form a signal peptide, tat-type signal; it reads MNSPDEHNGRRRFLQFSAAALASAAASPSLWA. The region spanning 62-125 is the 4Fe-4S Mo/W bis-MGD-type domain; that stretch reads DSVGVMTHSN…VYCSWSKQPD (64 aa). 4 residues coordinate [4Fe-4S] cluster: histidine 69, cysteine 73, cysteine 77, and cysteine 111. Residue aspartate 205 coordinates Mo-bis(molybdopterin guanine dinucleotide).

The protein belongs to the prokaryotic molybdopterin-containing oxidoreductase family. Heterotrimer of alpha, beta and gamma subunits. [4Fe-4S] cluster serves as cofactor. Requires Mo-bis(molybdopterin guanine dinucleotide) as cofactor. Post-translationally, predicted to be exported by the Tat system. The position of the signal peptide cleavage has not been experimentally proven.

It localises to the periplasm. It carries out the reaction chlorate + AH2 = chlorite + A + H2O. Functionally, terminal reductase that allows anaerobic growth on chlorate as the sole respiratory oxidant. The polypeptide is Chlorate reductase subunit alpha (clrA) (Ideonella dechloratans).